The primary structure comprises 151 residues: Proteolipid protein 2 (151 aa).

The MARVEL domain occupies 19–137 (FSRTKKGILL…DAYITFPLKQ (119 aa)). Transmembrane regions (helical) follow at residues 25–45 (GILL…FSAS), 48–68 (AYSS…VFYM), 85–105 (FFRS…VLVE), and 112–132 (IVAG…AYIT).

The protein resides in the membrane. Functionally, may play a role in cell differentiation in the intestinal epithelium. This Rattus norvegicus (Rat) protein is Proteolipid protein 2 (Plp2).